We begin with the raw amino-acid sequence, 486 residues long: UDP-N-acetylmuramate--L-alanine ligase (486 aa).

G126 to T132 lines the ATP pocket.

This sequence belongs to the MurCDEF family.

The protein resides in the cytoplasm. It carries out the reaction UDP-N-acetyl-alpha-D-muramate + L-alanine + ATP = UDP-N-acetyl-alpha-D-muramoyl-L-alanine + ADP + phosphate + H(+). It functions in the pathway cell wall biogenesis; peptidoglycan biosynthesis. Its function is as follows. Cell wall formation. This chain is UDP-N-acetylmuramate--L-alanine ligase, found in Pectobacterium atrosepticum (strain SCRI 1043 / ATCC BAA-672) (Erwinia carotovora subsp. atroseptica).